A 153-amino-acid chain; its full sequence is Transcription antitermination protein NusB (153 aa).

It belongs to the NusB family.

In terms of biological role, involved in transcription antitermination. Required for transcription of ribosomal RNA (rRNA) genes. Binds specifically to the boxA antiterminator sequence of the ribosomal RNA (rrn) operons. The sequence is that of Transcription antitermination protein NusB from Fusobacterium nucleatum subsp. nucleatum (strain ATCC 25586 / DSM 15643 / BCRC 10681 / CIP 101130 / JCM 8532 / KCTC 2640 / LMG 13131 / VPI 4355).